The chain runs to 393 residues: Formate-dependent phosphoribosylglycinamide formyltransferase (393 aa).

Residues 22–23 (EL) and Glu82 each bind N(1)-(5-phospho-beta-D-ribosyl)glycinamide. ATP contacts are provided by residues Arg114, Lys155, 160–165 (SSGKGQ), 195–198 (EGFI), and Glu203. In terms of domain architecture, ATP-grasp spans 119–308 (RLAAEELDLP…QFALHARAIL (190 aa)). Positions 267 and 279 each coordinate Mg(2+). N(1)-(5-phospho-beta-D-ribosyl)glycinamide is bound by residues Asp286, Lys356, and 363-364 (RR).

Belongs to the PurK/PurT family. Homodimer.

It carries out the reaction N(1)-(5-phospho-beta-D-ribosyl)glycinamide + formate + ATP = N(2)-formyl-N(1)-(5-phospho-beta-D-ribosyl)glycinamide + ADP + phosphate + H(+). The protein operates within purine metabolism; IMP biosynthesis via de novo pathway; N(2)-formyl-N(1)-(5-phospho-D-ribosyl)glycinamide from N(1)-(5-phospho-D-ribosyl)glycinamide (formate route): step 1/1. Functionally, involved in the de novo purine biosynthesis. Catalyzes the transfer of formate to 5-phospho-ribosyl-glycinamide (GAR), producing 5-phospho-ribosyl-N-formylglycinamide (FGAR). Formate is provided by PurU via hydrolysis of 10-formyl-tetrahydrofolate. This is Formate-dependent phosphoribosylglycinamide formyltransferase from Pseudomonas putida (strain GB-1).